The primary structure comprises 134 residues: Arsenate reductase 2 (134 aa).

Catalysis depends on nucleophile residues Cys-11, Cys-83, and Cys-90. 2 cysteine pairs are disulfide-bonded: Cys-11-Cys-83 and Cys-83-Cys-90.

The protein belongs to the low molecular weight phosphotyrosine protein phosphatase family. Thioredoxin-coupled ArsC subfamily.

It is found in the cytoplasm. It carries out the reaction arsenate + [thioredoxin]-dithiol + H(+) = arsenite + [thioredoxin]-disulfide + H2O. Catalyzes the reduction of arsenate [As(V)] to arsenite [As(III)]. The polypeptide is Arsenate reductase 2 (Bacillus cereus (strain ATCC 10987 / NRS 248)).